Consider the following 536-residue polypeptide: Zinc finger protein 394 (536 aa).

The interval 18 to 45 is disordered; sequence AVKVEEDSPGSQEPSGSGDWQNPETSRK. A Glycyl lysine isopeptide (Lys-Gly) (interchain with G-Cter in SUMO2) cross-link involves residue Lys-20. The segment covering 26 to 41 has biased composition (polar residues); it reads PGSQEPSGSGDWQNPE. An SCAN box domain is found at 44–126; that stretch reads RKQFRQLRYQ…ALARTLQRAL (83 aa). In terms of domain architecture, KRAB spans 135–196; sequence ATFKDVAESL…KQEMSKEAES (62 aa). Residues Lys-207 and Lys-260 each participate in a glycyl lysine isopeptide (Lys-Gly) (interchain with G-Cter in SUMO2) cross-link. 3 consecutive C2H2-type zinc fingers follow at residues 328–350, 356–378, and 384–406; these read YKCD…QRTH, YQCQ…QRTH, and YACP…QRTH. The C2H2-type 4; atypical zinc finger occupies 412-433; that stretch reads CKCEECGEIFHISSLFKHQRLH. A Glycyl lysine isopeptide (Lys-Gly) (interchain with G-Cter in SUMO2) cross-link involves residue Lys-413. 3 consecutive C2H2-type zinc fingers follow at residues 439 to 461, 467 to 489, and 495 to 517; these read HKCE…QRIH, YMCF…QRTH, and YKCF…QRIH.

Belongs to the krueppel C2H2-type zinc-finger protein family.

It is found in the nucleus. Functionally, may be involved in transcriptional regulation. This is Zinc finger protein 394 (Znf394) from Rattus norvegicus (Rat).